Here is a 147-residue protein sequence, read N- to C-terminus: Cytochrome c-type biogenesis protein CcmE (147 aa).

The Cytoplasmic segment spans residues 1–9 (MKNLKKQRR). The helical; Signal-anchor for type II membrane protein transmembrane segment at 10-30 (IQVIALATVALVLSTALIGYA) threads the bilayer. At 31-147 (MRDGINFFRA…EQGVYKGTEG (117 aa)) the chain is on the periplasmic side. Heme is bound by residues H123 and Y127.

It belongs to the CcmE/CycJ family.

Its subcellular location is the cell inner membrane. Functionally, heme chaperone required for the biogenesis of c-type cytochromes. Transiently binds heme delivered by CcmC and transfers the heme to apo-cytochromes in a process facilitated by CcmF and CcmH. In Roseobacter denitrificans (strain ATCC 33942 / OCh 114) (Erythrobacter sp. (strain OCh 114)), this protein is Cytochrome c-type biogenesis protein CcmE.